Here is a 467-residue protein sequence, read N- to C-terminus: Argininosuccinate lyase (467 aa).

The 2-(N(omega)-L-arginino)succinate site is built by Ser27, Asn114, and Thr159. His160 (proton acceptor) is an active-site residue. The active-site Proton donor is the Ser281. 2-(N(omega)-L-arginino)succinate is bound by residues Asn289, Tyr321, Gln326, and Lys329.

Belongs to the lyase 1 family. Argininosuccinate lyase subfamily. As to quaternary structure, homotetramer.

It carries out the reaction 2-(N(omega)-L-arginino)succinate = fumarate + L-arginine. The protein operates within amino-acid biosynthesis; L-arginine biosynthesis; L-arginine from L-ornithine and carbamoyl phosphate: step 3/3. It participates in nitrogen metabolism; urea cycle; L-arginine and fumarate from (N(omega)-L-arginino)succinate: step 1/1. This is Argininosuccinate lyase (ASL) from Aquarana catesbeiana (American bullfrog).